The following is a 312-amino-acid chain: Probable N-glycosylase/DNA lyase (312 aa).

The tract at residues 1-22 (MRIPVGDFDLEMTQRSGQTSQP) is disordered. The span at 13–22 (TQRSGQTSQP) shows a compositional bias: polar residues. Lys-235 is a catalytic residue.

The protein belongs to the type-1 OGG1 family.

The enzyme catalyses 2'-deoxyribonucleotide-(2'-deoxyribose 5'-phosphate)-2'-deoxyribonucleotide-DNA = a 3'-end 2'-deoxyribonucleotide-(2,3-dehydro-2,3-deoxyribose 5'-phosphate)-DNA + a 5'-end 5'-phospho-2'-deoxyribonucleoside-DNA + H(+). Functionally, DNA repair enzyme that incises DNA at 8-oxoG residues. Excises 7,8-dihydro-8-oxoguanine and 2,6-diamino-4-hydroxy-5-N-methylformamidopyrimidine (FAPY) from damaged DNA. Has a beta-lyase activity that nicks DNA 3' to the lesion. The sequence is that of Probable N-glycosylase/DNA lyase from Methanothermobacter thermautotrophicus (strain ATCC 29096 / DSM 1053 / JCM 10044 / NBRC 100330 / Delta H) (Methanobacterium thermoautotrophicum).